We begin with the raw amino-acid sequence, 253 residues long: Oxidoreductase AOL_s00215g277 (253 aa).

A helical membrane pass occupies residues 181–203 (FFGYWLTVILGYYIGSLLGYQPF).

The protein belongs to the oxidoreductase OpS7 family.

The protein resides in the membrane. The protein operates within secondary metabolite biosynthesis; terpenoid biosynthesis. Functionally, oxidoreductase; part of the gene cluster that mediates the biosynthesis of sesquiterpenyl epoxy-cyclohexenoids (SECs) such as anthrobotrisins and arthrosporols, metabolites that possess a novel hybrid carbon skeleton consisting of a polyketide-derived epoxycyclohexenol combined with a terpenoid-derived monocyclic sesquiterpenol substructure (PKS-PTS hybrid). The SEC pathway plays an important role for fungal soil colonization via decreasing fungal nematode-capturing ability. Within the pathway, the oxidoreductase AOL_s00215g277 seems to play a role in the farnesylation step of toluquinol to produce farnesyl hydroquinone, the hybrid precursor for biosynthesis of SECs. The pathway begins with the biosynthesis of 6-methylsalicylic acid (6-MSA), the first precursor of the polyketide-derived epoxycyclohexenol in arthrosporols, by the polyketide synthase (PKS) AOL_s00215g283 via condensation of 1 acetate and 3 malonate units. The 6-methylsalicylic acid decarboxylase AOL_s00215g281 then catalyzes the decarboxylation of 6-methylsalicylic acid to yield m-cresol. The cytochrome P450 monooxygenase AOL_s00215g282 further oxidizes m-cresol to yield toluquinol. With the assistance of the oxidoreductase AOL_s00215g277, the polyprenyl transferase AOL_s00215g276 catalyzes the farnesylation of toluquinol to produce farnesyl hydroquinone, the hybrid precursor for biosynthesis of SECs. Farnesyl hydroquinone undergoes epoxidation and then subsequent dehydrogenation to form farnesyl epoxy-quinone, the first and simplest SEC. The cytochrome P450 monooxygenase AOL_s00215g278 and the FAD-dependent monooxygenase AOL_s00215g279 might be involved in the oxygenation of the phenol moiety, most likely in the epoxy formation. The cytochrome P450 monooxygenases AOL_s00215g274 and AOL_s00215g280 are involved in specific regional ketone reductions at respectively C-4 and C-1 of farnesyl epoxy-quinone PubMed:33823587. This Arthrobotrys oligospora (strain ATCC 24927 / CBS 115.81 / DSM 1491) (Nematode-trapping fungus) protein is Oxidoreductase AOL_s00215g277.